The primary structure comprises 355 residues: Uroporphyrinogen decarboxylase (355 aa).

Substrate-binding positions include 27–31 (RQAGR), Asp78, Tyr155, Ser210, and His328.

This sequence belongs to the uroporphyrinogen decarboxylase family. Homodimer.

It localises to the cytoplasm. It catalyses the reaction uroporphyrinogen III + 4 H(+) = coproporphyrinogen III + 4 CO2. It participates in porphyrin-containing compound metabolism; protoporphyrin-IX biosynthesis; coproporphyrinogen-III from 5-aminolevulinate: step 4/4. Catalyzes the decarboxylation of four acetate groups of uroporphyrinogen-III to yield coproporphyrinogen-III. The polypeptide is Uroporphyrinogen decarboxylase (Ectopseudomonas mendocina (strain ymp) (Pseudomonas mendocina)).